Here is a 97-residue protein sequence, read N- to C-terminus: Co-chaperonin GroES (97 aa).

Belongs to the GroES chaperonin family. As to quaternary structure, heptamer of 7 subunits arranged in a ring. Interacts with the chaperonin GroEL.

Its subcellular location is the cytoplasm. Its function is as follows. Together with the chaperonin GroEL, plays an essential role in assisting protein folding. The GroEL-GroES system forms a nano-cage that allows encapsulation of the non-native substrate proteins and provides a physical environment optimized to promote and accelerate protein folding. GroES binds to the apical surface of the GroEL ring, thereby capping the opening of the GroEL channel. The chain is Co-chaperonin GroES from Serratia proteamaculans (strain 568).